The sequence spans 89 residues: Small ribosomal subunit protein uS14A (89 aa).

The protein belongs to the universal ribosomal protein uS14 family. Part of the 30S ribosomal subunit. Contacts proteins S3 and S10.

Its function is as follows. Binds 16S rRNA, required for the assembly of 30S particles and may also be responsible for determining the conformation of the 16S rRNA at the A site. This is Small ribosomal subunit protein uS14A from Pediococcus pentosaceus (strain ATCC 25745 / CCUG 21536 / LMG 10740 / 183-1w).